The chain runs to 305 residues: tRNA dimethylallyltransferase (305 aa).

Residue 9 to 16 (GPTAVGKT) coordinates ATP. Residue 11-16 (TAVGKT) participates in substrate binding. The interval 34 to 37 (DSRQ) is interaction with substrate tRNA.

Belongs to the IPP transferase family. Monomer. It depends on Mg(2+) as a cofactor.

It catalyses the reaction adenosine(37) in tRNA + dimethylallyl diphosphate = N(6)-dimethylallyladenosine(37) in tRNA + diphosphate. In terms of biological role, catalyzes the transfer of a dimethylallyl group onto the adenine at position 37 in tRNAs that read codons beginning with uridine, leading to the formation of N6-(dimethylallyl)adenosine (i(6)A). This Roseiflexus sp. (strain RS-1) protein is tRNA dimethylallyltransferase.